The sequence spans 252 residues: Aspartate/glutamate leucyltransferase (252 aa).

Belongs to the R-transferase family. Bpt subfamily.

Its subcellular location is the cytoplasm. The catalysed reaction is N-terminal L-glutamyl-[protein] + L-leucyl-tRNA(Leu) = N-terminal L-leucyl-L-glutamyl-[protein] + tRNA(Leu) + H(+). It carries out the reaction N-terminal L-aspartyl-[protein] + L-leucyl-tRNA(Leu) = N-terminal L-leucyl-L-aspartyl-[protein] + tRNA(Leu) + H(+). Its function is as follows. Functions in the N-end rule pathway of protein degradation where it conjugates Leu from its aminoacyl-tRNA to the N-termini of proteins containing an N-terminal aspartate or glutamate. This Hyphomonas neptunium (strain ATCC 15444) protein is Aspartate/glutamate leucyltransferase.